Here is a 157-residue protein sequence, read N- to C-terminus: Deoxyuridine 5'-triphosphate nucleotidohydrolase (157 aa).

Substrate contacts are provided by residues 76 to 78 (RSG), Asn89, 93 to 95 (TID), and Lys103.

Belongs to the dUTPase family. Requires Mg(2+) as cofactor.

It carries out the reaction dUTP + H2O = dUMP + diphosphate + H(+). Its pathway is pyrimidine metabolism; dUMP biosynthesis; dUMP from dCTP (dUTP route): step 2/2. Functionally, this enzyme is involved in nucleotide metabolism: it produces dUMP, the immediate precursor of thymidine nucleotides and it decreases the intracellular concentration of dUTP so that uracil cannot be incorporated into DNA. This is Deoxyuridine 5'-triphosphate nucleotidohydrolase from Brucella abortus (strain 2308).